Here is a 163-residue protein sequence, read N- to C-terminus: C-type lectin lectoxin-Lio1 (163 aa).

An N-terminal signal peptide occupies residues 1–21 (MERFIFAALLVVALSLSGTGA). Disulfide bonds link Cys25-Cys36, Cys53-Cys152, and Cys127-Cys144. Positions 32–153 (SDGYCYKVFK…CRSKRYFICK (122 aa)) constitute a C-type lectin domain. The Mannose-binding motif lies at 117–119 (EPN). 2 residues coordinate Ca(2+): Glu125 and Asp141.

Belongs to the true venom lectin family. In terms of tissue distribution, expressed by the venom gland.

It localises to the secreted. Mannose-binding lectin which recognizes specific carbohydrate structures and agglutinates a variety of animal cells by binding to cell-surface glycoproteins and glycolipids. May be a calcium-dependent lectin. The protein is C-type lectin lectoxin-Lio1 of Erythrolamprus poecilogyrus (Water snake).